The sequence spans 2157 residues: Polyketide synthase 2 (2157 aa).

The tract at residues 7 to 244 (FIFGDQTGGF…IPIPIWAPYH (238 aa)) is N-terminal acylcarrier protein transacylase domain (SAT). Positions 374 to 807 (DSKIAIIGMS…GGNSALLLED (434 aa)) constitute a Ketosynthase family 3 (KS3) domain. Active-site for beta-ketoacyl synthase activity residues include Cys-546, His-681, and His-723. Residues 908–1213 (GFVFSGQGAQ…ASLHRKDDGW (306 aa)) are malonyl-CoA:ACP transacylase (MAT) domain. Ser-998 serves as the catalytic For acyl/malonyl transferase activity. The tract at residues 1290–1605 (TSSVQKIIRQ…RSLLNKVLPP (316 aa)) is product template (PT) domain. Residues 1294–1428 (QKIIRQTDGP…CLLRFADPTS (135 aa)) form an N-terminal hotdog fold region. Residues 1294-1600 (QKIIRQTDGP…FLGMSRSLLN (307 aa)) enclose the PKS/mFAS DH domain. Catalysis depends on His-1327, which acts as the Proton acceptor; for dehydratase activity. A C-terminal hotdog fold region spans residues 1455-1600 (TDSLLSRGIV…FLGMSRSLLN (146 aa)). The active-site Proton donor; for dehydratase activity is Asp-1514. The disordered stretch occupies residues 1626 to 1652 (AASAKDTERRPLDIPTRAQRQPSSAQT). Over residues 1643 to 1652 (AQRQPSSAQT) the composition is skewed to polar residues. Residues 1649–1726 (SAQTGTMGRI…ELKAFLGADQ (78 aa)) enclose the Carrier 1 domain. Ser-1686 carries the O-(pantetheine 4'-phosphoryl)serine modification. The segment at 1733-1762 (ACESSNGQHTPQTSDKGSGTLAVQKTDDDT) is disordered. A compositionally biased stretch (polar residues) spans 1735-1755 (ESSNGQHTPQTSDKGSGTLAV). The 75-residue stretch at 1765–1839 (DMTLNRVCAI…SLQKALCGSE (75 aa)) folds into the Carrier 2 domain. Position 1799 is an O-(pantetheine 4'-phosphoryl)serine (Ser-1799). The tract at residues 1840–1859 (AASNGAPEANETTPSSHRLE) is disordered. Residues 1875-2151 (ASPPHATSIL…MIEMGNLIGE (277 aa)) form a thioesterase (TE) domain region. The For thioesterase activity role is filled by Ser-1981.

Polyketide synthase; part of the Pks2 gene cluster that mediates the formation of infectious structures (appressoria), enabling these fungi to kill insects faster. The product of the Pks2 gene cluster is different from the one of Pks1 and has still not been identified. In Metarhizium robertsii (strain ARSEF 23 / ATCC MYA-3075) (Metarhizium anisopliae (strain ARSEF 23)), this protein is Polyketide synthase 2.